A 121-amino-acid chain; its full sequence is DLVEFGFMIRCANRNSQPAWQYMDYGCYCGKRGSGTPVDDVDRCCQTHNECYDEAAKIPGCKPKWTFYFYQCGSGSQFTCRKSKDVCRNVVCDCDFKAALCLTGARYNSANYNIDIKTHCR.

Disulfide bonds link C11/C72, C27/C120, C29/C45, C44/C101, C51/C94, C61/C87, and C80/C92.

This sequence belongs to the phospholipase A2 family. Group I subfamily. N49 sub-subfamily. Heterohexamer. 2 forms exist: 2 A or 2 B chains, 2 C chains and 2 covalently-linked D chains, and 1 A or 1 B, 1 C, 2 covalently-linked D chains and 2 differentially glycosylated covalently-linked D chains. Textilotoxin was originally described as pentameric. In terms of tissue distribution, expressed by the venom gland.

It is found in the secreted. Its function is as follows. Snake venom oligomeric phospholipase A2 that has potent presynaptic neurotoxicity. Chain B is not itself neurotoxic, but it is essential for the neurotoxicity of textilotoxin. Subunit B possesses a very low phospholipase activity. In Pseudonaja textilis (Eastern brown snake), this protein is Basic phospholipase A2 homolog textilotoxin B chain.